Reading from the N-terminus, the 874-residue chain is Alanine--tRNA ligase (874 aa).

Zn(2+) is bound by residues His564, His568, Cys665, and His669.

Belongs to the class-II aminoacyl-tRNA synthetase family. Requires Zn(2+) as cofactor.

The protein resides in the cytoplasm. It carries out the reaction tRNA(Ala) + L-alanine + ATP = L-alanyl-tRNA(Ala) + AMP + diphosphate. In terms of biological role, catalyzes the attachment of alanine to tRNA(Ala) in a two-step reaction: alanine is first activated by ATP to form Ala-AMP and then transferred to the acceptor end of tRNA(Ala). Also edits incorrectly charged Ser-tRNA(Ala) and Gly-tRNA(Ala) via its editing domain. This Paraburkholderia phytofirmans (strain DSM 17436 / LMG 22146 / PsJN) (Burkholderia phytofirmans) protein is Alanine--tRNA ligase.